The sequence spans 819 residues: Endonuclease MutS2 (819 aa).

Residue 339 to 346 (GPNTGGKT) coordinates ATP. A Smr domain is found at 744–819 (VDVRGLRVDE…GAGVTVAELA (76 aa)).

It belongs to the DNA mismatch repair MutS family. MutS2 subfamily. Homodimer. Binds to stalled ribosomes, contacting rRNA.

In terms of biological role, endonuclease that is involved in the suppression of homologous recombination and thus may have a key role in the control of bacterial genetic diversity. Functionally, acts as a ribosome collision sensor, splitting the ribosome into its 2 subunits. Detects stalled/collided 70S ribosomes which it binds and splits by an ATP-hydrolysis driven conformational change. Acts upstream of the ribosome quality control system (RQC), a ribosome-associated complex that mediates the extraction of incompletely synthesized nascent chains from stalled ribosomes and their subsequent degradation. Probably generates substrates for RQC. This Gemmatimonas aurantiaca (strain DSM 14586 / JCM 11422 / NBRC 100505 / T-27) protein is Endonuclease MutS2.